The chain runs to 535 residues: 3-hydroxyindolin-2-one monooxygenase (535 aa).

Transmembrane regions (helical) follow at residues 14–34 and 469–489; these read VVQCTPTQAAAVLGVLLLLAI and ICAGATFAIATVEIMLANLIY. Cys470 lines the heme pocket.

Belongs to the cytochrome P450 family. The cofactor is heme.

It is found in the membrane. The catalysed reaction is 3-hydroxyindolin-2-one + reduced [NADPH--hemoprotein reductase] + O2 = 2-hydroxy-2H-1,4-benzoxazin-3(4H)-one + oxidized [NADPH--hemoprotein reductase] + H2O + H(+). Its pathway is secondary metabolite biosynthesis; 2,4-dihydroxy-1,4-benzoxazin-3-one biosynthesis; 2,4-dihydroxy-1,4-benzoxazin-3-one from indoleglycerol phosphate: step 4/5. Functionally, catalyzes the conversion of 3-hydroxyindolin-2-one to 2-hydroxy-1,4-benzoxazin-3-one (HBOA). In Zea mays (Maize), this protein is 3-hydroxyindolin-2-one monooxygenase (CYP71C1).